The primary structure comprises 152 residues: Protein-export protein SecB (152 aa).

It belongs to the SecB family. As to quaternary structure, homotetramer, a dimer of dimers. One homotetramer interacts with 1 SecA dimer.

The protein localises to the cytoplasm. Its function is as follows. One of the proteins required for the normal export of preproteins out of the cell cytoplasm. It is a molecular chaperone that binds to a subset of precursor proteins, maintaining them in a translocation-competent state. It also specifically binds to its receptor SecA. The sequence is that of Protein-export protein SecB from Rickettsia africae (strain ESF-5).